A 364-amino-acid chain; its full sequence is Uroporphyrinogen decarboxylase (364 aa).

Residues 28–32, aspartate 78, tyrosine 160, threonine 215, and histidine 333 contribute to the substrate site; that span reads RQAGR.

Belongs to the uroporphyrinogen decarboxylase family. As to quaternary structure, homodimer.

The protein resides in the cytoplasm. It carries out the reaction uroporphyrinogen III + 4 H(+) = coproporphyrinogen III + 4 CO2. The protein operates within porphyrin-containing compound metabolism; protoporphyrin-IX biosynthesis; coproporphyrinogen-III from 5-aminolevulinate: step 4/4. Functionally, catalyzes the decarboxylation of four acetate groups of uroporphyrinogen-III to yield coproporphyrinogen-III. In Burkholderia pseudomallei (strain 668), this protein is Uroporphyrinogen decarboxylase.